The chain runs to 300 residues: Cis-3-alkyl-4-alkyloxetan-2-one decarboxylase (300 aa).

The region spanning 33 to 282 (VVVMLHGNPS…DDANHYVLED (250 aa)) is the AB hydrolase-1 domain.

It belongs to the AB hydrolase superfamily. Homotetramer. Forms a complex with OleC and OleD.

The protein resides in the cytoplasm. It carries out the reaction a cis-3-alkyl-4-alkyloxetan-2-one = a cis-alkene + CO2. Involved in olefin biosynthesis. Catalyzes the elimination of carbon dioxide from beta-lactones to form the final olefin product. The sequence is that of Cis-3-alkyl-4-alkyloxetan-2-one decarboxylase from Xanthomonas campestris pv. campestris (strain ATCC 33913 / DSM 3586 / NCPPB 528 / LMG 568 / P 25).